Reading from the N-terminus, the 225-residue chain is Prolactin (225 aa).

The N-terminal stretch at 1–28 is a signal peptide; sequence MTIQGSDRKGTLLLLVMSNLLFCQNVHP. A disulfide bridge connects residues C32 and C37. A phosphoserine mark is found at S52 and S116. Disulfide bonds link C84/C200 and C217/C225.

It belongs to the somatotropin/prolactin family. In terms of assembly, interacts with PRLR.

The protein resides in the secreted. Its function is as follows. Prolactin acts primarily on the mammary gland by promoting lactation. The polypeptide is Prolactin (PRL) (Alexandromys montebelli (Japanese grass vole)).